A 369-amino-acid chain; its full sequence is WAT1-related protein At3g53210 (369 aa).

10 helical membrane-spanning segments follow: residues 12 to 31 (IAMV…MRYA), 39 to 59 (LVFP…SAYF), 72 to 92 (FLIQ…GFYI), 103 to 123 (ASAT…LLGI), 133 to 153 (GIAK…ITLY), 182 to 202 (WTLG…WIVL), 214 to 234 (FSFV…ISAY), 252 to 272 (ALLY…IYVV), 278 to 298 (LFVS…ATLA), and 303 to 323 (FYLG…LVVM). 2 EamA domains span residues 24–150 (NHVI…SLVI) and 194–323 (LCWS…LVVM). Positions 348–369 (GDEEDYHNNKPRSPISQPLISS) are disordered.

Belongs to the drug/metabolite transporter (DMT) superfamily. Plant drug/metabolite exporter (P-DME) (TC 2.A.7.4) family.

The protein localises to the membrane. This chain is WAT1-related protein At3g53210, found in Arabidopsis thaliana (Mouse-ear cress).